An 821-amino-acid polypeptide reads, in one-letter code: Condensin-2 complex subunit kle-2 (821 aa).

Positions 389–426 (VMQNDEPNTSRRPDENYAPMDFDDDFGGGGDDDDDDYI) are disordered. The segment covering 409–424 (DFDDDFGGGGDDDDDD) has biased composition (acidic residues). The stretch at 529–561 (TAILAEKKRRIKEKTAKIREARIQNMQRKRTAR) forms a coiled coil.

The protein belongs to the CND2 H2 (condensin-2 subunit 2) family. Component of the condensin II complex, which contains the mix-1/SMC2 and smc-4/SMC4 heterodimer, and three non SMC subunits, capg-2, kle-2 and hcp-6 that probably regulate the complex. Within the complex, interacts with mix-1, smc-4, capg-2 and hcp-6.

Its subcellular location is the nucleus. The protein resides in the chromosome. It is found in the centromere. Its function is as follows. Regulatory subunit of the condensin II complex, a complex that seems to play a role in prophase chromosome condensation and in chromosome segregation in mitosis and in meiosis. The sequence is that of Condensin-2 complex subunit kle-2 (kle-2) from Caenorhabditis elegans.